The primary structure comprises 471 residues: Glutamate--tRNA ligase (471 aa).

Positions 9-19 (PSPTGYLHVGG) match the 'HIGH' region motif. The Zn(2+) site is built by Cys98, Cys100, Cys125, and Asp127. A 'KMSKS' region motif is present at residues 237–241 (KLSKR). Residue Lys240 coordinates ATP.

This sequence belongs to the class-I aminoacyl-tRNA synthetase family. Glutamate--tRNA ligase type 1 subfamily. As to quaternary structure, monomer. Zn(2+) is required as a cofactor.

It localises to the cytoplasm. The catalysed reaction is tRNA(Glu) + L-glutamate + ATP = L-glutamyl-tRNA(Glu) + AMP + diphosphate. Functionally, catalyzes the attachment of glutamate to tRNA(Glu) in a two-step reaction: glutamate is first activated by ATP to form Glu-AMP and then transferred to the acceptor end of tRNA(Glu). This Yersinia enterocolitica serotype O:8 / biotype 1B (strain NCTC 13174 / 8081) protein is Glutamate--tRNA ligase.